A 78-amino-acid chain; its full sequence is uncharacterized protein (78 aa).

Residues 1–28 (MQANHSVSYLYESSTSKRSNGLFSQTQK) form a disordered region.

This is an uncharacterized protein from Saccharomyces cerevisiae (strain ATCC 204508 / S288c) (Baker's yeast).